We begin with the raw amino-acid sequence, 444 residues long: MGKGGNQGEGAAEREVSVPTFSWEEIQKHNLRTDRWLVIDRKVYNITKWSIQHPGGQRVIGHYAGEDATDAFRAFHPDLEFVGKFLKPLLIGELAPEEPSQDHGKNSKITEDFRALRKTAEDMNLFKTNHVFFLLLLAHIIALESIAWFTVFYFGNGWISTLITAFVLATSQAQAGWLQHDYGHLSVYRKPKWNHLVHKFVIGHLKGASANWWNHRHFQHHAKPNIFHKDPDVNMLHVFVLGEWQPIEYGKKKLKYLPYNHQHEYFFLIGPPLLIPMYFQYQIIMTMIVHKNWVDLAWAISYYIRFFITYIPFYGILGALLFLNFIRFLESHWFVWVTQMNHIVMEIDQEAYRDWFSSQLTATCNVEQSFFNDWFSGHLNFQIEHHLFPTMPRHNLHKIAPLVKSLCAKHGIEYQEKPLLRALLDIIRSLKKSGKLWLDAYLHK.

Residues 1–131 are Cytoplasmic-facing; that stretch reads MGKGGNQGEG…DMNLFKTNHV (131 aa). The Cytochrome b5 heme-binding domain maps to 18–95; the sequence is VPTFSWEEIQ…LKPLLIGELA (78 aa). Residues 132 to 152 form a helical membrane-spanning segment; that stretch reads FFLLLLAHIIALESIAWFTVF. At 153–157 the chain is on the lumenal side; it reads YFGNG. Residues 158–178 traverse the membrane as a helical segment; that stretch reads WISTLITAFVLATSQAQAGWL. Topologically, residues 179–264 are cytoplasmic; the sequence is QHDYGHLSVY…KYLPYNHQHE (86 aa). A Histidine box-1 motif is present at residues 180-184; that stretch reads HDYGH. The short motif at 217–221 is the Histidine box-2 element; the sequence is HFQHH. The chain crosses the membrane as a helical span at residues 265 to 285; sequence YFFLIGPPLLIPMYFQYQIIM. The Lumenal segment spans residues 286 to 305; sequence TMIVHKNWVDLAWAISYYIR. The helical transmembrane segment at 306–326 threads the bilayer; the sequence is FFITYIPFYGILGALLFLNFI. Topologically, residues 327–444 are cytoplasmic; the sequence is RFLESHWFVW…KLWLDAYLHK (118 aa). Positions 382-386 match the Histidine box-3 motif; sequence QIEHH.

Belongs to the fatty acid desaturase type 1 family.

The protein localises to the endoplasmic reticulum membrane. The enzyme catalyses (9Z,12Z)-octadecadienoyl-CoA + 2 Fe(II)-[cytochrome b5] + O2 + 2 H(+) = (6Z,9Z,12Z)-octadecatrienoyl-CoA + 2 Fe(III)-[cytochrome b5] + 2 H2O. The catalysed reaction is (9Z,12Z,15Z)-octadecatrienoyl-CoA + 2 Fe(II)-[cytochrome b5] + O2 + 2 H(+) = (6Z,9Z,12Z,15Z)-octadecatetraenoyl-CoA + 2 Fe(III)-[cytochrome b5] + 2 H2O. It catalyses the reaction (9Z,12Z,15Z,18Z,21Z)-tetracosapentaenoyl-CoA + 2 Fe(II)-[cytochrome b5] + O2 + 2 H(+) = (6Z,9Z,12Z,15Z,18Z,21Z)-tetracosahexaenoyl-CoA + 2 Fe(III)-[cytochrome b5] + 2 H2O. It carries out the reaction (11E)-octadecenoyl-CoA + 2 Fe(II)-[cytochrome b5] + O2 + 2 H(+) = (6Z,11E)-octadecadienoyl-CoA + 2 Fe(III)-[cytochrome b5] + 2 H2O. The enzyme catalyses (11Z,14Z)-eicosadienoyl-CoA + 2 Fe(II)-[cytochrome b5] + O2 + 2 H(+) = (8Z,11Z,14Z)-eicosatrienoyl-CoA + 2 Fe(III)-[cytochrome b5] + 2 H2O. The catalysed reaction is (11Z,14Z,17Z)-eicosatrienoyl-CoA + 2 Fe(II)-[cytochrome b5] + O2 + 2 H(+) = (8Z,11Z,14Z,17Z)-eicosatetraenoyl-CoA + 2 Fe(III)-[cytochrome b5] + 2 H2O. It participates in lipid metabolism; polyunsaturated fatty acid biosynthesis. Functionally, involved in the biosynthesis of highly unsaturated fatty acids (HUFA) from the essential polyunsaturated fatty acids (PUFA) linoleic acid (LA) (18:2n-6) and alpha-linolenic acid (ALA) (18:3n-3) precursors, acting as a fatty acyl-coenzyme A (CoA) desaturase that introduces a cis double bond at carbon 6 of the fatty acyl chain. Catalyzes the first and rate limiting step in this pathway which is the desaturation of LA (18:2n-6) and ALA (18:3n-3) into gamma-linoleate (GLA) (18:3n-6) and stearidonate (18:4n-3), respectively. Subsequently, in the biosynthetic pathway of HUFA n-3 series, it desaturates tetracosapentaenoate (24:5n-3) to tetracosahexaenoate (24:6n-3), which is then converted to docosahexaenoate (DHA)(22:6n-3), an important lipid for nervous system function. It can also desaturate (11E)-octadecenoate (trans-vaccenoate) at carbon 6 generating (6Z,11E)-octadecadienoate. In addition to Delta-6 activity, this enzyme exhibits Delta-8 activity with slight biases toward n-3 fatty acyl-CoA substrates. This chain is Acyl-CoA 6-desaturase (FADS2), found in Pongo abelii (Sumatran orangutan).